A 169-amino-acid polypeptide reads, in one-letter code: Phosphopantetheine adenylyltransferase (169 aa).

Thr-14 is a substrate binding site. Residues 14–15 (TF) and His-22 contribute to the ATP site. Substrate contacts are provided by Lys-46, Leu-78, and Arg-92. Residues 93–95 (GLR), Glu-103, and 128–134 (HSFISSS) contribute to the ATP site.

Belongs to the bacterial CoaD family. As to quaternary structure, homohexamer. Requires Mg(2+) as cofactor.

The protein resides in the cytoplasm. The catalysed reaction is (R)-4'-phosphopantetheine + ATP + H(+) = 3'-dephospho-CoA + diphosphate. It participates in cofactor biosynthesis; coenzyme A biosynthesis; CoA from (R)-pantothenate: step 4/5. Reversibly transfers an adenylyl group from ATP to 4'-phosphopantetheine, yielding dephospho-CoA (dPCoA) and pyrophosphate. In Stenotrophomonas maltophilia (strain K279a), this protein is Phosphopantetheine adenylyltransferase.